The chain runs to 948 residues: UvrABC system protein A (948 aa).

33 to 40 (GLSGSGKS) contributes to the ATP binding site. The C4-type zinc-finger motif lies at 252–279 (CPICGFSIGELEPRMFSFNSPFGACPTC). ABC transporter domains follow at residues 309–587 (WIPT…KKSL) and 607–935 (ASDR…KYLK). 639–646 (GVSGSGKS) is an ATP binding site. A C4-type zinc finger spans residues 738-764 (CEACKGDGIIKIEMHFLPDVYVPCEVC).

This sequence belongs to the ABC transporter superfamily. UvrA family. As to quaternary structure, forms a heterotetramer with UvrB during the search for lesions.

The protein resides in the cytoplasm. The UvrABC repair system catalyzes the recognition and processing of DNA lesions. UvrA is an ATPase and a DNA-binding protein. A damage recognition complex composed of 2 UvrA and 2 UvrB subunits scans DNA for abnormalities. When the presence of a lesion has been verified by UvrB, the UvrA molecules dissociate. The protein is UvrABC system protein A of Staphylococcus aureus (strain MSSA476).